The sequence spans 610 residues: Elongation factor 4 (610 aa).

The tr-type G domain maps to 11–193; that stretch reads KYIRNFSIVA…QIVTKIPAPA (183 aa). Residues 23 to 28 and 140 to 143 each bind GTP; these read DHGKST and NKID.

It belongs to the TRAFAC class translation factor GTPase superfamily. Classic translation factor GTPase family. LepA subfamily.

It is found in the cell membrane. It catalyses the reaction GTP + H2O = GDP + phosphate + H(+). Functionally, required for accurate and efficient protein synthesis under certain stress conditions. May act as a fidelity factor of the translation reaction, by catalyzing a one-codon backward translocation of tRNAs on improperly translocated ribosomes. Back-translocation proceeds from a post-translocation (POST) complex to a pre-translocation (PRE) complex, thus giving elongation factor G a second chance to translocate the tRNAs correctly. Binds to ribosomes in a GTP-dependent manner. The sequence is that of Elongation factor 4 from Levilactobacillus brevis (strain ATCC 367 / BCRC 12310 / CIP 105137 / JCM 1170 / LMG 11437 / NCIMB 947 / NCTC 947) (Lactobacillus brevis).